A 285-amino-acid polypeptide reads, in one-letter code: Alpha-acetolactate decarboxylase (285 aa).

Positions methionine 1–alanine 25 are cleaved as a signal peptide.

It belongs to the alpha-acetolactate decarboxylase family.

It carries out the reaction (2S)-2-acetolactate + H(+) = (R)-acetoin + CO2. It functions in the pathway polyol metabolism; (R,R)-butane-2,3-diol biosynthesis; (R,R)-butane-2,3-diol from pyruvate: step 2/3. Its function is as follows. Converts acetolactate into acetoin, which can be excreted by the cells. This may be a mechanism for controlling the internal pH of cells in the stationary stage. The polypeptide is Alpha-acetolactate decarboxylase (aldB) (Brevibacillus brevis (Bacillus brevis)).